Reading from the N-terminus, the 972-residue chain is Mast/stem cell growth factor receptor Kit (972 aa).

The signal sequence occupies residues 1–25 (MRGARRAWDFLFVLQLLLRVQTGSS). Over 26–520 (QPSVSPEELS…QIHAHTLFTP (495 aa)) the chain is Extracellular. Ig-like C2-type domains follow at residues 27–112 (PSVS…VFVR), 121–205 (DPPL…LKVR), 212–308 (PVVA…LEVV), 317–410 (PMMN…VYVN), and 413–507 (PEIL…FNFA). 4 disulfide bridges follow: C58/C97, C136/C186, C151/C183, and C233/C290. N94 and N145 each carry an N-linked (GlcNAc...) asparagine glycan. Residues N283, N293, N300, N320, N352, N367, N400, N463, and N486 are each glycosylated (N-linked (GlcNAc...) asparagine). C428 and C491 are disulfide-bonded. A helical transmembrane segment spans residues 521–541 (LLIGFVIAAGMMCIIVMILTY). Residues 542-972 (KYLQKPMYEV…TQPLLVHEDV (431 aa)) are Cytoplasmic-facing. Phosphotyrosine; by autocatalysis is present on residues Y543, Y549, Y564, and Y566. Y564 is a Mg(2+) binding site. The interval 564–566 (YVY) is important for interaction with phosphotyrosine-binding proteins. In terms of domain architecture, Protein kinase spans 585–933 (LSFGKTLGAG…ISESTNHIYS (349 aa)). Residues 592–599 (GAGAFGKV), K619, and 667–673 (EYCCYGD) each bind ATP. Y699, Y717, and Y726 each carry phosphotyrosine; by autocatalysis. Phosphoserine; by PKC/PRKCA occurs at positions 737 and 742. The Proton acceptor role is filled by D788. Position 792 (R792) interacts with ATP. Mg(2+)-binding residues include N793 and D806. A Phosphoserine modification is found at S817. Y819 is subject to Phosphotyrosine; by autocatalysis. S887 bears the Phosphoserine mark. A phosphotyrosine; by autocatalysis mark is found at Y896 and Y932. S955 carries the phosphoserine modification.

This sequence belongs to the protein kinase superfamily. Tyr protein kinase family. CSF-1/PDGF receptor subfamily. In terms of assembly, monomer in the absence of bound KITLG/SCF. Homodimer in the presence of bound KITLG/SCF, forming a heterotetramer with two KITLG/SCF molecules. Interacts (via phosphorylated tyrosine residues) with the adapter proteins GRB2 and GRB7 (via SH2 domain), and SH2B2/APS. Interacts (via C-terminus) with MPDZ (via the tenth PDZ domain). Interacts (via phosphorylated tyrosine residues) with PIK3R1 and PIK3 catalytic subunit. Interacts (via phosphorylated tyrosine) with CRK (isoform Crk-II), FYN, SHC1 and MATK/CHK (via SH2 domain). Interacts with LYN and FES/FPS. Interacts (via phosphorylated tyrosine residues) with the protein phosphatases PTPN6/SHP-1 (via SH2 domain), PTPN11/SHP-2 (via SH2 domain) and PTPRU. Interacts with PLCG1. Interacts with DOK1 and TEC. Interacts with IL1RAP (independent of stimulation with KITLG/SCF). A mast cell-specific KITLG/SCF-induced interleukin-33 signaling complex contains IL1RL1, IL1RAP, KIT and MYD88. In terms of processing, ubiquitinated by SOCS6. KIT is rapidly ubiquitinated after autophosphorylation induced by KITLG/SCF binding, leading to internalization and degradation. Autophosphorylated on tyrosine residues. KITLG/SCF binding promotes autophosphorylation. Phosphorylated tyrosine residues are important for interaction with specific binding partners.

Its subcellular location is the cell membrane. The catalysed reaction is L-tyrosyl-[protein] + ATP = O-phospho-L-tyrosyl-[protein] + ADP + H(+). Present in an inactive conformation in the absence of bound ligand. KITLG/SCF binding leads to dimerization and activation by autophosphorylation on tyrosine residues. Activity is down-regulated by PRKCA-mediated phosphorylation on serine residues. Functionally, tyrosine-protein kinase that acts as a cell-surface receptor for the cytokine KITLG/SCF and plays an essential role in the regulation of cell survival and proliferation, hematopoiesis, stem cell maintenance, gametogenesis, mast cell development, migration and function, and in melanogenesis. In response to KITLG/SCF binding, KIT can activate several signaling pathways. Phosphorylates PIK3R1, PLCG1, SH2B2/APS and CBL. Activates the AKT1 signaling pathway by phosphorylation of PIK3R1, the regulatory subunit of phosphatidylinositol 3-kinase. Activated KIT also transmits signals via GRB2 and activation of RAS, RAF1 and the MAP kinases MAPK1/ERK2 and/or MAPK3/ERK1. Promotes activation of STAT family members STAT1, STAT3, STAT5A and STAT5B. Activation of PLCG1 leads to the production of the cellular signaling molecules diacylglycerol and inositol 1,4,5-trisphosphate. KIT signaling is modulated by protein phosphatases, and by rapid internalization and degradation of the receptor. Activated KIT promotes phosphorylation of the protein phosphatases PTPN6/SHP-1 and PTPRU, and of the transcription factors STAT1, STAT3, STAT5A and STAT5B. Promotes phosphorylation of PIK3R1, CBL, CRK (isoform Crk-II), LYN, MAPK1/ERK2 and/or MAPK3/ERK1, PLCG1, SRC and SHC1. This is Mast/stem cell growth factor receptor Kit (KIT) from Sus scrofa (Pig).